Consider the following 240-residue polypeptide: 45 kDa antigen (240 aa).

Fibronectin type-III domains lie at 1-109 (EFPD…FHTL) and 110-210 (ANGT…KSGH).

This is 45 kDa antigen from Taenia ovis (Sheep tapeworm).